Consider the following 693-residue polypeptide: Sister chromatid cohesion 1 protein 3 (693 aa).

4 disordered regions span residues 167 to 250, 262 to 361, 460 to 511, and 545 to 573; these read IPMD…PGTV, DLSP…KNFD, PVSP…TFDN, and TQSGNWETESYRTEPSTSTVPEDLPGQRN. 2 stretches are compositionally biased toward basic and acidic residues: residues 178-201 and 232-243; these read VSRHTGEIDVETAHETGPDNEPRD and TEERIPNSERND. The segment covering 264–277 has biased composition (polar residues); it reads SPTSHPSFAAQQQD. The segment covering 278–295 has biased composition (basic and acidic residues); sequence VRVERTESLDETLNEKEP. Over residues 316-325 the composition is skewed to low complexity; the sequence is RSGSPGSAAG. 2 stretches are compositionally biased toward polar residues: residues 465-483 and 545-564; these read PDSTNPDSTVQLSPAQQTE and TQSGNWETESYRTEPSTSTV.

It belongs to the rad21 family. In terms of assembly, component of the cohesin complex. In terms of tissue distribution, low expression in shoots, buds, siliques, leaves and roots. Found in, but not limited to, actively dividing cells: in procambium, protoderm and ground meristem in roots, and in shoot and floral meristems.

Its subcellular location is the nucleus. May be involved in sister chromatid cohesion during mitosis. The chain is Sister chromatid cohesion 1 protein 3 (SYN3) from Arabidopsis thaliana (Mouse-ear cress).